The sequence spans 67 residues: Mitotic-spindle organizing protein 1A (67 aa).

The protein belongs to the MOZART1 family. Part of the gamma-tubulin complex. Interacts with GIP1 and GCP3. In terms of tissue distribution, mostly expressed in siliques and flowers, and, to a lower extent, in leaves, roots and seedlings, with highest levels in young tissues, meristematic cells, and the vasculature.

Its subcellular location is the cytoplasm. The protein resides in the cytoskeleton. It localises to the microtubule organizing center. The protein localises to the spindle. It is found in the nucleus. Its subcellular location is the phragmoplast. The protein resides in the nucleus envelope. In terms of biological role, required for gamma-tubulin complex recruitment to the microtubule organizing centers (MTOCs). During mitosis, modulates gamma-tubulin complex localization, spindle stability and chromosomal segregation. Necessary for gametophyte development and embryogenesis. The polypeptide is Mitotic-spindle organizing protein 1A (GIP2) (Arabidopsis thaliana (Mouse-ear cress)).